The sequence spans 505 residues: RNA-splicing ligase RtcB homolog (505 aa).

Residues D119, C122, H227, H259, and H353 each coordinate Mn(2+). A GMP-binding site is contributed by N226–E230. Residues H353–N354, G402–M405, S409, H428–G431, and K504 contribute to the GMP site. The active-site GMP-histidine intermediate is H428.

It belongs to the RtcB family. As to quaternary structure, catalytic component of the tRNA-splicing ligase complex. The cofactor is Mn(2+).

Its subcellular location is the nucleus. The protein resides in the cytoplasm. It carries out the reaction a 3'-end 3'-phospho-ribonucleotide-RNA + a 5'-end dephospho-ribonucleoside-RNA + GTP = a ribonucleotidyl-ribonucleotide-RNA + GMP + diphosphate. The enzyme catalyses a 3'-end 2',3'-cyclophospho-ribonucleotide-RNA + a 5'-end dephospho-ribonucleoside-RNA + GTP + H2O = a ribonucleotidyl-ribonucleotide-RNA + GMP + diphosphate + H(+). Catalytic subunit of the tRNA-splicing ligase complex that acts by directly joining spliced tRNA halves to mature-sized tRNAs by incorporating the precursor-derived splice junction phosphate into the mature tRNA as a canonical 3',5'-phosphodiester. May act as an RNA ligase with broad substrate specificity, and may function toward other RNAs. This chain is RNA-splicing ligase RtcB homolog, found in Danio rerio (Zebrafish).